Consider the following 156-residue polypeptide: Small ribosomal subunit protein uS7c (156 aa).

This sequence belongs to the universal ribosomal protein uS7 family. In terms of assembly, part of the 30S ribosomal subunit.

The protein localises to the plastid. Its subcellular location is the chloroplast. Functionally, one of the primary rRNA binding proteins, it binds directly to 16S rRNA where it nucleates assembly of the head domain of the 30S subunit. The polypeptide is Small ribosomal subunit protein uS7c (rps7) (Pyropia yezoensis (Susabi-nori)).